We begin with the raw amino-acid sequence, 178 residues long: PRA1 family protein 2 (178 aa).

Over 1–41 (MSEVRLPPLRALDDFVLGSARLAAPDPGDPQRWCHRVINNL) the chain is Cytoplasmic. The helical transmembrane segment at 42–62 (LYYQTNYLLCFGISLALAGYI) threads the bilayer. Topologically, residues 63–64 (RP) are extracellular. A helical transmembrane segment spans residues 65 to 85 (LHTLLSALVVVVALGVLVWAA). Over 86 to 96 (ETRAAVRRCRR) the chain is Cytoplasmic. A helical membrane pass occupies residues 97–119 (SHPAACLAAVLAISLFILWAVGG). Residues 120–122 (AFT) lie on the Extracellular side of the membrane. The chain crosses the membrane as a helical span at residues 123–140 (FLLSITAPVFLILLHASL). The Cytoplasmic segment spans residues 141-178 (RLRNLKNKIENKIESIGLKRTPMGLLLEALGQEQEAGS).

The protein belongs to the PRA1 family. In terms of assembly, interacts with CCR5 and GDE1.

It localises to the endosome membrane. Functionally, may be involved in ER/Golgi transport and vesicular traffic. Plays a proapoptotic role in cerulenin-induced neuroblastoma apoptosis. This chain is PRA1 family protein 2 (Praf2), found in Mus musculus (Mouse).